The following is a 128-amino-acid chain: Putative protein SEM1, isoform 2 (128 aa).

Basic residues predominate over residues 22–32 (KHGIKRGRRPS). Residues 22 to 42 (KHGIKRGRRPSIRSPAQRARG) are disordered.

The sequence is that of Putative protein SEM1, isoform 2 from Homo sapiens (Human).